Here is an 835-residue protein sequence, read N- to C-terminus: Replication origin-binding protein (835 aa).

Residues Pro54–His215 enclose the Helicase ATP-binding domain. Residue Ala67 to Thr74 participates in ATP binding.

Belongs to the herpesviridae OriBP family. As to quaternary structure, homodimer. Interacts with the major DNA-binding protein. Interacts with the helicase/primase component 52 and the polymerase accessory protein.

Its subcellular location is the host nucleus. In terms of biological role, functions as a docking protein to recruit essential components of the viral replication machinery to viral DNA origins. In the presence of the major DNA-binding protein, opens dsDNA leading to a conformational change in the origin that facilitates DNA unwinding and subsequent replication. The sequence is that of Replication origin-binding protein from Homo sapiens (Human).